A 144-amino-acid chain; its full sequence is Large ribosomal subunit protein uL13 (144 aa).

This sequence belongs to the universal ribosomal protein uL13 family. As to quaternary structure, part of the 50S ribosomal subunit.

Functionally, this protein is one of the early assembly proteins of the 50S ribosomal subunit, although it is not seen to bind rRNA by itself. It is important during the early stages of 50S assembly. This is Large ribosomal subunit protein uL13 from Clostridium botulinum (strain ATCC 19397 / Type A).